The sequence spans 92 residues: Large ribosomal subunit protein eL31 (92 aa).

Belongs to the eukaryotic ribosomal protein eL31 family.

This chain is Large ribosomal subunit protein eL31, found in Halorubrum lacusprofundi (strain ATCC 49239 / DSM 5036 / JCM 8891 / ACAM 34).